The following is an 884-amino-acid chain: Formin-like protein 9 (884 aa).

The signal sequence occupies residues 1 to 19 (MGMAMRCVLVLFSVSPVLL). A helical transmembrane segment spans residues 140–160 (IVALGVVGLCLVVLGVVIAAF). Disordered regions lie at residues 179 to 204 (FHHG…PDPL), 295 to 318 (THDS…LSPK), and 403 to 473 (TMTN…PLPR). A compositionally biased stretch (low complexity) spans 300–310 (SDSSYQSLSPD). The segment covering 429-443 (KPAPPPPPQKNPPPN) has biased composition (pro residues). Residues 464-884 (VGKDGSPLPR…QTLNLVLPLK (421 aa)) form the FH2 domain.

Belongs to the formin-like family. Class-I subfamily.

The protein localises to the membrane. The chain is Formin-like protein 9 (FH9) from Oryza sativa subsp. indica (Rice).